The chain runs to 203 residues: Pacifastin-like protease inhibitor cvp4 (203 aa).

The first 19 residues, 1 to 19 (MGFLACALLVVATAHAATA), serve as a signal peptide directing secretion. 3 Pacifastin domains span residues 23–59 (PETCEIGSNFKNYCNNCYCFDGVMDHALCTRESCDRN), 85–121 (DEPCTPGENFKYYCNDCQCLDGLRAHAMCTRMRCDRN), and 147–184 (DESCAPGASFKYYCNSCTCGAEGKVAEAQCTSQECDRY). 6 cysteine pairs are disulfide-bonded: cysteine 26/cysteine 41, cysteine 36/cysteine 56, cysteine 39/cysteine 51, cysteine 88/cysteine 103, cysteine 98/cysteine 118, and cysteine 101/cysteine 113. The span at 129-148 (RKYPEPEKWNSEKERKKSDE) shows a compositional bias: basic and acidic residues. Positions 129-150 (RKYPEPEKWNSEKERKKSDESC) are disordered. 3 disulfides stabilise this stretch: cysteine 150-cysteine 165, cysteine 160-cysteine 181, and cysteine 163-cysteine 176.

This sequence belongs to the protease inhibitor I19 family. In terms of tissue distribution, expressed by the venom gland.

It is found in the secreted. Its function is as follows. Inhibits trypsin activity and prophenoloxidase (PPO) activation, an enzyme essential for both clotting and insect innate immune responses. It does not inhibit activity of chymotrypsin and protease K, and has no effect on phenoloxidase (PO) activity. This chain is Pacifastin-like protease inhibitor cvp4, found in Pimpla hypochondriaca (Parasitoid wasp).